Reading from the N-terminus, the 387-residue chain is Sorting nexin-7 (387 aa).

Positions Lys30 to Leu151 constitute a PX domain. A 1,2-diacyl-sn-glycero-3-phospho-(1D-myo-inositol-3-phosphate)-binding residues include Arg73, Gln75, Lys103, and Arg117. One can recognise a BAR domain in the interval Gly178–Pro387.

This sequence belongs to the sorting nexin family. As to quaternary structure, heterodimer; heterodimerizes with SNX4.

It is found in the early endosome membrane. Its function is as follows. Involved in the regulation of endocytosis and in several stages of intracellular trafficking. Together with SNX4, involved in autophagosome assembly by regulating trafficking and recycling of phospholipid scramblase ATG9A. The sequence is that of Sorting nexin-7 (SNX7) from Macaca fascicularis (Crab-eating macaque).